Reading from the N-terminus, the 228-residue chain is Lipoprotein-releasing system ATP-binding protein LolD 2 (228 aa).

One can recognise an ABC transporter domain in the interval 9 to 228; the sequence is RGLERVYKTE…KDGHLELQRV (220 aa). Position 42–49 (42–49) interacts with ATP; the sequence is GPSGSGKS.

The protein belongs to the ABC transporter superfamily. Lipoprotein translocase (TC 3.A.1.125) family. The complex is composed of two ATP-binding proteins (LolD) and two transmembrane proteins (LolC and LolE).

Its subcellular location is the cell inner membrane. Its function is as follows. Part of the ABC transporter complex LolCDE involved in the translocation of mature outer membrane-directed lipoproteins, from the inner membrane to the periplasmic chaperone, LolA. Responsible for the formation of the LolA-lipoprotein complex in an ATP-dependent manner. This is Lipoprotein-releasing system ATP-binding protein LolD 2 from Caulobacter vibrioides (strain ATCC 19089 / CIP 103742 / CB 15) (Caulobacter crescentus).